The primary structure comprises 412 residues: Shaggy-related protein kinase zeta (412 aa).

Positions 1 to 19 (MTSIPLGPPQPPSLAPQPP) are enriched in pro residues. Residues 1–33 (MTSIPLGPPQPPSLAPQPPHLHGGDSLKRRPDI) form a disordered region. Positions 22–33 (HGGDSLKRRPDI) are enriched in basic and acidic residues. Position 26 is a phosphoserine (Ser26). Residues 72–356 (YMAERVVGTG…ALEACAHPFF (285 aa)) enclose the Protein kinase domain. ATP contacts are provided by residues 78-86 (VGTGSFGIV) and Lys101. Position 127 is a phosphoserine (Ser127). 2 positions are modified to phosphothreonine: Thr136 and Thr137. The Proton acceptor role is filled by Asp197. At Ser219 the chain carries Phosphoserine. Phosphotyrosine is present on Tyr232. Ser252 bears the Phosphoserine mark. Thr293 carries the phosphothreonine modification. A Phosphoserine modification is found at Ser342. Thr346 bears the Phosphothreonine mark.

This sequence belongs to the protein kinase superfamily. CMGC Ser/Thr protein kinase family. GSK-3 subfamily. In terms of assembly, binds to KIB1. Interacts with beet curly top virus AL4/C4 and tomato golden mosaic virus AL4/AC4. In terms of processing, autophosphorylated mainly on threonine and serine residues.

It catalyses the reaction L-seryl-[protein] + ATP = O-phospho-L-seryl-[protein] + ADP + H(+). The catalysed reaction is L-threonyl-[protein] + ATP = O-phospho-L-threonyl-[protein] + ADP + H(+). Its function is as follows. May mediate extracellular signals to regulate transcription in differentiating cells. The sequence is that of Shaggy-related protein kinase zeta (ASK6) from Arabidopsis thaliana (Mouse-ear cress).